The chain runs to 194 residues: Peptidyl-tRNA hydrolase (194 aa).

Tyrosine 17 lines the tRNA pocket. Histidine 22 serves as the catalytic Proton acceptor. Phenylalanine 68, asparagine 70, and asparagine 116 together coordinate tRNA.

This sequence belongs to the PTH family. In terms of assembly, monomer.

The protein resides in the cytoplasm. The catalysed reaction is an N-acyl-L-alpha-aminoacyl-tRNA + H2O = an N-acyl-L-amino acid + a tRNA + H(+). Hydrolyzes ribosome-free peptidyl-tRNAs (with 1 or more amino acids incorporated), which drop off the ribosome during protein synthesis, or as a result of ribosome stalling. Its function is as follows. Catalyzes the release of premature peptidyl moieties from peptidyl-tRNA molecules trapped in stalled 50S ribosomal subunits, and thus maintains levels of free tRNAs and 50S ribosomes. The chain is Peptidyl-tRNA hydrolase from Haemophilus influenzae (strain 86-028NP).